A 468-amino-acid polypeptide reads, in one-letter code: Adenosylhomocysteinase (468 aa).

3 residues coordinate substrate: Thr57, Asp132, and Glu194. Residue 195-197 (TTT) participates in NAD(+) binding. Positions 224 and 228 each coordinate substrate. NAD(+) contacts are provided by residues Asn229, 258 to 263 (GFGDVG), Glu281, Asn316, 337 to 339 (IGH), and Asn382.

It belongs to the adenosylhomocysteinase family. The cofactor is NAD(+).

The protein localises to the cytoplasm. The enzyme catalyses S-adenosyl-L-homocysteine + H2O = L-homocysteine + adenosine. It participates in amino-acid biosynthesis; L-homocysteine biosynthesis; L-homocysteine from S-adenosyl-L-homocysteine: step 1/1. Its function is as follows. May play a key role in the regulation of the intracellular concentration of adenosylhomocysteine. The protein is Adenosylhomocysteinase of Methylorubrum populi (strain ATCC BAA-705 / NCIMB 13946 / BJ001) (Methylobacterium populi).